The primary structure comprises 404 residues: CD209 antigen (404 aa).

The Cytoplasmic portion of the chain corresponds to 1 to 37 (MSDSKEPRLQQLGLLEEEQLRGLGFRQTRGYKSLAGC). 3 consecutive short sequence motifs (endocytosis signal) follow at residues 14-15 (LL), 16-18 (EEE), and 31-34 (YKSL). Residues 38–58 (LGHGPLVLQLLSFTLLAGLLV) form a helical; Signal-anchor for type II membrane protein membrane-spanning segment. Over 59–404 (QVSKVPSSIS…APATPNPPPA (346 aa)) the chain is Extracellular. N-linked (GlcNAc...) asparagine glycosylation is present at asparagine 80. Repeat copies occupy residues 96–118 (KLQEIYQELTQLKAAVGELPEKS), 119–141 (KLQEIYQELTRLKAAVGELPEKS), 142–164 (KLQEIYQELTWLKAAVGELPEKS), 165–187 (KMQEIYQELTRLKAAVGELPEKS), 188–210 (KQQEIYQELTRLKAAVGELPEKS), 211–233 (KQQEIYQELTRLKAAVGELPEKS), and 234–257 (KQQEIYQELTQLKAAVERLCHPCP). A 7 X approximate tandem repeats region spans residues 96 to 257 (KLQEIYQELT…AVERLCHPCP (162 aa)). Disulfide bonds link cysteine 256-cysteine 267, cysteine 284-cysteine 377, and cysteine 356-cysteine 369. The C-type lectin domain maps to 263-378 (FQGNCYFMSN…CNLAKFWICK (116 aa)). Ca(2+)-binding residues include glutamate 347, asparagine 349, valine 351, glutamate 354, asparagine 365, and aspartate 366.

As to quaternary structure, homotetramer. Interacts with C1QBP; the interaction is indicative for a C1q:C1QBP:CD209 signaling complex. Interacts with ICAM2 and ICAM3 by binding to mannose-like carbohydrates. Interacts (via C-type lectin domain) with CEACAM1 (via Lewis X moieties); this interaction is regulated by the glycosylation pattern of CEACAM1 on cell types and regulates contact between dendritic cells and neutrophils. (Microbial infection) Interacts with HIV-1 and HIV-2 gp120. In terms of assembly, (Microbial infection) Interacts with ebolavirus envelope glycoproteins. As to quaternary structure, (Microbial infection) Interacts with cytomegalovirus gB protein. (Microbial infection) Interacts with HCV E2 protein. In terms of assembly, (Microbial infection) Interacts with dengue virus major envelope protein E. As to quaternary structure, (Microbial infection) Interacts with measles hemagglutinin. (Microbial infection) Interacts with herpes simplex virus 1 surface proteins. In terms of assembly, (Microbial infection) Interacts with Influenzavirus A hemagglutinin. As to quaternary structure, (Microbial infection) Interacts with SARS-CoV spike glycoprotein. (Microbial infection) Interacts with Japanese encephalitis virus E protein. In terms of assembly, (Microbial infection) Interacts with Lassa virus Glycoprotein. As to quaternary structure, (Microbial infection) Interacts with marburg virus glycoprotein. (Microbial infection) Interacts with Respiratory syncytial virus glycoprotein G. In terms of assembly, (Microbial infection) Interacts with Rift valley fever virus and uukuniemi virus envelope glycoprotein. As to quaternary structure, (Microbial infection) Interacts with west-nile virus envelope glycoprotein. (Microbial infection) Interacts with whole M.bovis cells in a Ca(2+)-dependent and independent manner; in vitro experiments suggest it interacts with CH60.1 (groL1), DnaK, GADPH (gap) and LrpG. In terms of tissue distribution, predominantly expressed in dendritic cells and in DC-residing tissues. Also found in placental macrophages, endothelial cells of placental vascular channels, peripheral blood mononuclear cells, and THP-1 monocytes.

It localises to the cell membrane. The protein resides in the secreted. In terms of biological role, pathogen-recognition receptor expressed on the surface of immature dendritic cells (DCs) and involved in initiation of primary immune response. Thought to mediate the endocytosis of pathogens which are subsequently degraded in lysosomal compartments. The receptor returns to the cell membrane surface and the pathogen-derived antigens are presented to resting T-cells via MHC class II proteins to initiate the adaptive immune response. Its function is as follows. On DCs it is a high affinity receptor for ICAM2 and ICAM3 by binding to mannose-like carbohydrates. May act as a DC rolling receptor that mediates transendothelial migration of DC presursors from blood to tissues by binding endothelial ICAM2. Seems to regulate DC-induced T-cell proliferation by binding to ICAM3 on T-cells in the immunological synapse formed between DC and T-cells. (Microbial infection) Acts as an attachment receptor for HIV-1 and HIV-2. Functionally, (Microbial infection) Acts as an attachment receptor for Ebolavirus. In terms of biological role, (Microbial infection) Acts as an attachment receptor for Cytomegalovirus. Its function is as follows. (Microbial infection) Acts as an attachment receptor for HCV. (Microbial infection) Acts as an attachment receptor for Dengue virus. Functionally, (Microbial infection) Acts as an attachment receptor for Measles virus. In terms of biological role, (Microbial infection) Acts as an attachment receptor for Herpes simplex virus 1. Its function is as follows. (Microbial infection) Acts as an attachment receptor for Influenzavirus A. (Microbial infection) Acts as an attachment receptor for SARS-CoV. Functionally, (Microbial infection) Acts as an attachment receptor for Japanese encephalitis virus. In terms of biological role, (Microbial infection) Acts as an attachment receptor for Lassa virus. Acts as an attachment receptor for Marburg virusn. Its function is as follows. (Microbial infection) Acts as an attachment receptor for Respiratory syncytial virus. (Microbial infection) Acts as an attachment receptor for Rift valley fever virus and uukuniemi virus. Functionally, (Microbial infection) Acts as an attachment receptor for West-nile virus. In terms of biological role, (Microbial infection) Probably recognizes in a calcium-dependent manner high mannose N-linked oligosaccharides in a variety of bacterial pathogen antigens, including Leishmania pifanoi LPG, Lewis-x antigen in Helicobacter pylori LPS, mannose in Klebsiella pneumonae LPS, di-mannose and tri-mannose in Mycobacterium tuberculosis ManLAM and Lewis-x antigen in Schistosoma mansoni SEA. Recognition of M.tuberculosis by dendritic cells occurs partially via this molecule. The chain is CD209 antigen (CD209) from Homo sapiens (Human).